Consider the following 81-residue polypeptide: UPF0180 protein YkuS (81 aa).

It belongs to the UPF0180 family.

The protein is UPF0180 protein YkuS (ykuS) of Bacillus subtilis (strain 168).